An 800-amino-acid polypeptide reads, in one-letter code: Putative antiporter subunit mnhA2 (800 aa).

20 helical membrane passes run 1 to 21, 33 to 53, 78 to 98, 118 to 138, 167 to 187, 207 to 227, 241 to 261, 273 to 293, 300 to 320, 331 to 351, 387 to 407, 424 to 444, 472 to 492, 527 to 547, 595 to 615, 627 to 647, 651 to 671, 676 to 696, 712 to 732, and 768 to 788; these read MSLVYLLIAILVIMAMILLMS, IALVAPVISSIYFLIQIPSVA, GLSLMFSLIISLIGIAVFFYA, LFMFSMIGIVLSDNTILMYIF, FMITVFGGLALLVGFIMLYIM, GLFIPMIFMFLLGAFTKSAQF, TPVSAYLHSATMVKAGIFLLL, YVYIVTFVGLITMLFGSITAL, GILAYSTISQLGMIMAMVGIG, IASIYVFVLFGALFHLMNHAI, LVMTIAALSMAGVPFLNGFLS, FSLISMIAIVFVGVIASVFTF, PWLFSLPSLILMVLVPVIFFV, GFNIPLLLTIIIILLGSVLAI, IIMTLGIFMIIIGYGYIRIGL, GALEIILAIVTVTIGISLIFI, LTMVILNGVIGFVVTLFFIAM, LALTQLVVETITTILFIVSFS, IIKISVSLLMALIVVSLIFIT, and LDTLFEGLVLIITGLGIYTLL.

The protein belongs to the CPA3 antiporters (TC 2.A.63) subunit A family. May form a heterooligomeric complex that consists of seven subunits: mnhA2, mnhB2, mnhC2, mnhD2, mnhE2, mnhF2 and mnhG2.

The protein localises to the cell membrane. The sequence is that of Putative antiporter subunit mnhA2 (mnhA2) from Staphylococcus aureus (strain USA300).